The sequence spans 1222 residues: BOS complex subunit NOMO1 (1222 aa).

Residues 1-31 (MLVGQGAGPLGPAVVTAAVVLLLSGVGPAHG) form the signal peptide. Over 32–1155 (SEDIVVGCGG…NPTRKLPEQD (1124 aa)) the chain is Extracellular. Residues Asn-50, Asn-218, and Asn-618 are each glycosylated (N-linked (GlcNAc...) asparagine). Residues 1156-1176 (IAQGSYIALPLTLLVLLAGYN) form a helical membrane-spanning segment. At 1177-1222 (HDKLIPLLLQLTSRLQGVRALGQAASDNSGPEDAKRQAKKQKTRRT) the chain is on the cytoplasmic side. The interval 1198–1222 (GQAASDNSGPEDAKRQAKKQKTRRT) is disordered. Ser-1205 is modified (phosphoserine). Basic residues predominate over residues 1213 to 1222 (QAKKQKTRRT).

In terms of assembly, component of the back of Sec61 (BOS) complex, composed of NCLN/Nicalin, NOMO (NOMO1, NOMO2 or NOMO3) and TMEM147. The BOS complex is part of the multi-pass translocon (MPT) complex, composed of three subcomplexes, the GEL complex (composed of RAB5IF/OPTI and TMCO1), the BOS complex (composed of NCLN/Nicalin, NOMO and TMEM147) and the PAT complex (composed of WDR83OS/Asterix and CCDC47). The MPT complex associates with the SEC61 complex. Due to the strong similarity between NOMO1, NOMO2 and NOMO3, similar interaction pattern probably occur for the three gene copies. In terms of tissue distribution, expressed in colon tumor tissue and in adjacent normal colonic mucosa.

It is found in the endoplasmic reticulum membrane. Its function is as follows. Component of the multi-pass translocon (MPT) complex that mediates insertion of multi-pass membrane proteins into the lipid bilayer of membranes. The MPT complex takes over after the SEC61 complex: following membrane insertion of the first few transmembrane segments of proteins by the SEC61 complex, the MPT complex occludes the lateral gate of the SEC61 complex to promote insertion of subsequent transmembrane regions. The polypeptide is BOS complex subunit NOMO1 (NOMO1) (Homo sapiens (Human)).